Here is a 319-residue protein sequence, read N- to C-terminus: ATP-dependent 6-phosphofructokinase (319 aa).

Gly-11 provides a ligand contact to ATP. 21–25 (RAVVR) contributes to the ADP binding site. ATP-binding positions include 72 to 73 (RC) and 102 to 105 (GDGS). Asp-103 provides a ligand contact to Mg(2+). Substrate is bound at residue 125–127 (TID). Residue Asp-127 is the Proton acceptor of the active site. Arg-154 lines the ADP pocket. Substrate contacts are provided by residues Arg-162 and 169–171 (MGR). ADP contacts are provided by residues 185–187 (GAE), Arg-211, and 213–215 (KKH). Residues Glu-222, Arg-243, and 249–252 (HIQR) each bind substrate.

This sequence belongs to the phosphofructokinase type A (PFKA) family. ATP-dependent PFK group I subfamily. Prokaryotic clade 'B1' sub-subfamily. In terms of assembly, homotetramer. Mg(2+) serves as cofactor.

It localises to the cytoplasm. The catalysed reaction is beta-D-fructose 6-phosphate + ATP = beta-D-fructose 1,6-bisphosphate + ADP + H(+). It functions in the pathway carbohydrate degradation; glycolysis; D-glyceraldehyde 3-phosphate and glycerone phosphate from D-glucose: step 3/4. With respect to regulation, allosterically activated by ADP and other diphosphonucleosides, and allosterically inhibited by phosphoenolpyruvate. Its function is as follows. Catalyzes the phosphorylation of D-fructose 6-phosphate to fructose 1,6-bisphosphate by ATP, the first committing step of glycolysis. The chain is ATP-dependent 6-phosphofructokinase from Bacillus licheniformis (strain ATCC 14580 / DSM 13 / JCM 2505 / CCUG 7422 / NBRC 12200 / NCIMB 9375 / NCTC 10341 / NRRL NRS-1264 / Gibson 46).